We begin with the raw amino-acid sequence, 279 residues long: uncharacterized protein (279 aa).

This is an uncharacterized protein from Bacillus subtilis (strain 168).